A 320-amino-acid polypeptide reads, in one-letter code: Malate dehydrogenase (320 aa).

NAD(+)-binding positions include 10–15 and Asp34; that span reads GSGMIG. Substrate is bound by residues Arg83 and Arg89. NAD(+)-binding positions include Asn96 and 119–121; that span reads ITN. Asn121 and Arg152 together coordinate substrate. The Proton acceptor role is filled by His176.

Belongs to the LDH/MDH superfamily. MDH type 3 family.

It carries out the reaction (S)-malate + NAD(+) = oxaloacetate + NADH + H(+). Its function is as follows. Catalyzes the reversible oxidation of malate to oxaloacetate. The protein is Malate dehydrogenase of Bartonella tribocorum (strain CIP 105476 / IBS 506).